Reading from the N-terminus, the 189-residue chain is MRKIGIIGGTFDPPHYGHLLIANEVYHALNLEEVWFLPNQIPPHKQGRNITSVESRLQMLELATEEEEHFSICLEELSRKGPSYTYDTMLQLTKKHPDVQFHFIIGGDMVEYLPKWYNIEALLDLVTFVGVARPGYTLHTPYPITTVEIPEFAVSSSLLRERYKEKKTCKYLLPEKVQVYIERNGLYES.

Belongs to the NadD family.

It catalyses the reaction nicotinate beta-D-ribonucleotide + ATP + H(+) = deamido-NAD(+) + diphosphate. The protein operates within cofactor biosynthesis; NAD(+) biosynthesis; deamido-NAD(+) from nicotinate D-ribonucleotide: step 1/1. In terms of biological role, catalyzes the reversible adenylation of nicotinate mononucleotide (NaMN) to nicotinic acid adenine dinucleotide (NaAD). This chain is Probable nicotinate-nucleotide adenylyltransferase, found in Bacillus cereus (strain Q1).